A 1182-amino-acid chain; its full sequence is IQ motif and SEC7 domain-containing protein 3 (1182 aa).

A coiled-coil region spans residues 20-56 (AIVQNQQSLIHTQRERIDELERRLDELSAENRSLWEH). 2 disordered regions span residues 62–157 (AQPP…ERPP) and 230–275 (AAGR…RQQP). Over residues 63–78 (QPPPGLVPPSSAPLPA) the composition is skewed to pro residues. 2 stretches are compositionally biased toward low complexity: residues 79–105 (APAT…AAAP) and 254–263 (GAGAASPRAG). S259 carries the post-translational modification Phosphoserine. Residues 315–344 (SRRAACTIQTAFRQYQLSKNFEKIRNSLLE) enclose the IQ domain. Disordered stretches follow at residues 444–479 (AGPP…AHSG) and 521–616 (EPAA…ASAS). A compositionally biased stretch (basic and acidic residues) spans 533 to 548 (SGREAPEAPAVGREDA). Residues 555 to 569 (AEAAASGAADGATAP) are compositionally biased toward low complexity. Residues 572–581 (EEEEEEEETA) show a composition bias toward acidic residues. Positions 598 to 616 (SSSSTSTKSAKSGSEASAS) are enriched in low complexity. The 194-residue stretch at 644-837 (TLSTDTLRKR…VGIYERIQQK (194 aa)) folds into the SEC7 domain. The region spanning 850–983 (TKVEKSIVGM…LKESIAEVTE (134 aa)) is the PH domain. Residues 964 to 992 (SDEMQKFVEDLKESIAEVTELEQIRIEWE) are a coiled coil. Disordered regions lie at residues 1002–1090 (LSFK…PGTL) and 1121–1182 (YTSS…RSLV). Residues 1022–1033 (AKREAALRERPA) show a composition bias toward basic and acidic residues. The segment covering 1043–1052 (NRLQTSQHNS) has biased composition (polar residues). The segment covering 1061–1087 (PVPPPDLQPSPPRQQTPPLPPPPPTPP) has biased composition (pro residues). Over residues 1121–1132 (YTSSSSDSCGST) the composition is skewed to low complexity. Positions 1147 to 1157 (PPLPPPPPPYN) are enriched in pro residues.

This sequence belongs to the BRAG family. In terms of assembly, interacts with DLG1 and DLG4. Interacts with GPHN. In terms of tissue distribution, expressed specifically in the adult brain, predominantly in the cerebral cortex and the olfactory bulb, but not in the fetal brain. Expressed only in mature neurons, but not in undifferentiated neural stem precursor cells (NSPCs), nor in glioma cells.

The protein localises to the cytoplasm. Its subcellular location is the postsynaptic density. Functionally, acts as a guanine nucleotide exchange factor (GEF) for ARF1. The protein is IQ motif and SEC7 domain-containing protein 3 (IQSEC3) of Homo sapiens (Human).